Here is a 570-residue protein sequence, read N- to C-terminus: MTRYAGLGRTRPKKLTPKAPIPIYREHQIDDLEEEIQNGLQQVETGVEKAEESEYHLQVAINAVASGRVVNEAHIPTPETVLSNLQYDELYPPVFSQPATYIRFSSTVEDCCGCPYNMTDEDDVFLKIMNEKRDPADRCTEDQFEEVMNFFEETVRLKQPYAAVGSAPVLSFAEMQESMDATVEDYVRRLAKDVYDHWKTRRLNNGNQSLLPSLKFETGAETDDTDPYVCFRRREVRQVRKTRGRDAQSADKLRRLRKELEDARQLVALVRQRELARKEMLATERILFLQRAEVKDMKRKLNIKDDDEDLINQKPKKKPIEAPPMQRPAAAQLRMPPKPGAQAAEDLQLLEDVQAEKENEIIRDIKANIAKHMKWNEGYVDFTRAPLSPSPERTVDISFRPAITTQLPTPPSSDSSENTPDLALDMSGTVSYRDKLDEHALIMSEDANKMPSFRRRIGRGGRLLIDRRNFASRCRVELDPWKADRFKYDQEDSDEDLDYEMDQYDISLMQNRAIMLAKARDQAHAQAQAAQVRRLQAEQAALNNLNSGQTSGQTMGSNPGPGAIAPTPET.

The tract at residues 541-570 (ALNNLNSGQTSGQTMGSNPGPGAIAPTPET) is disordered. Residues 543–557 (NNLNSGQTSGQTMGS) show a composition bias toward polar residues.

It belongs to the enhancer of polycomb family. Component of the NuA4 histone acetyltransferase complex.

Its subcellular location is the nucleus. Component of the NuA4 histone acetyltransferase complex which is involved in transcriptional activation of selected genes principally by acetylation of nucleosomal histone H4 and H2A. The NuA4 complex is also involved in DNA repair. Involved in gene silencing by neighboring heterochromatin, blockage of the silencing spreading along the chromosome, and required for cell cycle progression through G2/M. The polypeptide is Enhancer of polycomb-like protein 1 (epl1) (Emericella nidulans (strain FGSC A4 / ATCC 38163 / CBS 112.46 / NRRL 194 / M139) (Aspergillus nidulans)).